The primary structure comprises 332 residues: Glyceraldehyde-3-phosphate dehydrogenase 1 (332 aa).

Residues 11 to 12 (RI), aspartate 32, and arginine 77 each bind NAD(+). Residues 148–150 (SCT), threonine 179, 208–209 (TG), and arginine 231 each bind D-glyceraldehyde 3-phosphate. Cysteine 149 acts as the Nucleophile in catalysis. Asparagine 313 is an NAD(+) binding site.

It belongs to the glyceraldehyde-3-phosphate dehydrogenase family. As to quaternary structure, homotetramer.

It localises to the cytoplasm. The enzyme catalyses D-glyceraldehyde 3-phosphate + phosphate + NAD(+) = (2R)-3-phospho-glyceroyl phosphate + NADH + H(+). It participates in carbohydrate degradation; glycolysis; pyruvate from D-glyceraldehyde 3-phosphate: step 1/5. The protein is Glyceraldehyde-3-phosphate dehydrogenase 1 (Gapdh1) of Drosophila melanogaster (Fruit fly).